Here is a 224-residue protein sequence, read N- to C-terminus: MKRTKNINQETFRKEWRTHRLAPVALAVSAVFFLAGCEQTDETVSLYQNADDCSSANPSMAAQCTTAYNNALKEAEKTAPKYATKEDCVAEFGEAQCTQTPAPAQAGMAAEPQQSGGMSWMPLMAGYMMGRMMGGGAGFAQQPLFSPKTPASPANGQFVDAAGKNYGNAATGRTMTVPKTALAPKPATTSTITRGGFGETVAKQNSMQRSSASSNSSSSRSMGG.

The segment at 180–224 (TALAPKPATTSTITRGGFGETVAKQNSMQRSSASSNSSSSRSMGG) is disordered. Over residues 204–224 (QNSMQRSSASSNSSSSRSMGG) the composition is skewed to low complexity.

Belongs to the UPF0441 family.

In Pectobacterium atrosepticum (strain SCRI 1043 / ATCC BAA-672) (Erwinia carotovora subsp. atroseptica), this protein is UPF0441 protein ECA0329.